A 318-amino-acid polypeptide reads, in one-letter code: Malate dehydrogenase (318 aa).

NAD(+) is bound by residues 11 to 17 (GAGGNVG) and Asp-37. The substrate site is built by Arg-86 and Arg-92. Residues Asn-99 and 122-124 (VTN) contribute to the NAD(+) site. Substrate contacts are provided by Asn-124 and Arg-155. Residue His-179 is the Proton acceptor of the active site.

It belongs to the LDH/MDH superfamily. MDH type 3 family.

The catalysed reaction is (S)-malate + NAD(+) = oxaloacetate + NADH + H(+). Functionally, catalyzes the reversible oxidation of malate to oxaloacetate. The polypeptide is Malate dehydrogenase (Nitratiruptor sp. (strain SB155-2)).